The sequence spans 184 residues: Lysozyme 1 (184 aa).

An N-terminal signal peptide occupies residues 1–20 (MNGLILFCAVVFATAVCTYG). The 116-residue stretch at 69 to 184 (TGMVSQQCLR…WRRVQAQGCN (116 aa)) folds into the I-type lysozyme domain. 6 cysteine pairs are disulfide-bonded: C76/C152, C81/C87, C92/C101, C114/C134, C124/C130, and C148/C166. The active-site Proton donor is the E84. Residue D95 is the Nucleophile of the active site. 107 to 113 (KRAYWID) is a substrate binding site. Residues Y138 and 159–161 (HNG) contribute to the substrate site.

Hemolymph, labial palps, non-vesiculated cells of mantle connective tissue, cells of interlamellar junctions and epithelia surrounding the water tubes of the gills.

It localises to the secreted. The enzyme catalyses Hydrolysis of (1-&gt;4)-beta-linkages between N-acetylmuramic acid and N-acetyl-D-glucosamine residues in a peptidoglycan and between N-acetyl-D-glucosamine residues in chitodextrins.. In terms of biological role, has antibacterial activity against the Gram-positive bacteria L.garvieae, M.luteus and Enterococcus sp., and the Gram-negative bacteria E.coli and V.vulnificus. Weak antibacterial activity against the Gram-negative bacterium A.hydrophila. No antibacterial activity detected against the Gram-positive bacterium S.iniae or against the Gram-negative bacterium E.ictaluri. Shows some chitinase activity but no isopeptidase activity. This is Lysozyme 1 from Crassostrea virginica (Eastern oyster).